Here is a 197-residue protein sequence, read N- to C-terminus: Probable proteasome subunit beta type-4 (197 aa).

The protein belongs to the peptidase T1B family. As to quaternary structure, the 26S proteasome consists of a 20S proteasome core and two 19S regulatory subunits. The 20S proteasome core is composed of 28 subunits that are arranged in four stacked rings, resulting in a barrel-shaped structure. The two end rings are each formed by seven alpha subunits, and the two central rings are each formed by seven beta subunits. The catalytic chamber with the active sites is on the inside of the barrel.

The protein resides in the cytoplasm. It is found in the nucleus. In terms of biological role, non-catalytic component of the proteasome which degrades poly-ubiquitinated proteins in the cytoplasm and in the nucleus. It is essential for the regulated turnover of proteins and for the removal of misfolded proteins. The proteasome is a multicatalytic proteinase complex that is characterized by its ability to cleave peptides with Arg, Phe, Tyr, Leu, and Glu adjacent to the leaving group at neutral or slightly basic pH. It has an ATP-dependent proteolytic activity. The polypeptide is Probable proteasome subunit beta type-4 (PRE1) (Encephalitozoon cuniculi (strain GB-M1) (Microsporidian parasite)).